The following is a 308-amino-acid chain: Glutamyl-Q tRNA(Asp) synthetase (308 aa).

L-glutamate-binding positions include 19–23 (RFAPS) and Glu55. A 'HIGH' region motif is present at residues 22-32 (PSPSGELHFGS). Zn(2+) is bound by residues Cys111, Cys113, Tyr125, and Cys129. The L-glutamate site is built by Tyr182 and Arg200. A 'KMSKS' region motif is present at residues 238–242 (KLSKQ). Lys241 is a binding site for ATP.

Belongs to the class-I aminoacyl-tRNA synthetase family. GluQ subfamily. The cofactor is Zn(2+).

Its function is as follows. Catalyzes the tRNA-independent activation of glutamate in presence of ATP and the subsequent transfer of glutamate onto a tRNA(Asp). Glutamate is transferred on the 2-amino-5-(4,5-dihydroxy-2-cyclopenten-1-yl) moiety of the queuosine in the wobble position of the QUC anticodon. The sequence is that of Glutamyl-Q tRNA(Asp) synthetase from Shigella flexneri.